The sequence spans 481 residues: MVVRTQNSESKIKEFFEFCKENEVEFVDFRFSDIKGTWNHIAYSFGALTHDMFKEGIPFDASSFKGWQGIEHSDMILTPDLVRYFIDPFSADVSAVVFCDVYDVYKNQPYEKCPRSIAKKALKHLRDLGLGDVAYFGAENEFFIFDSIKIKDASNSQYYEVDSEEGEWNRDKSFENGVNFGHRPGKQGGYMPVPPTDTMMDIRTEIVKVLNQVGLETFVVHHEVAQAQGEVGVKFGDLVEAADNVQKLKYVVKMVAHLNGKTATFMPKPLYGDNGSGMHTHVSIWKNNENLFGGETYKGLSEFALYFLGGVLRHARGLAAFTNASTNSYKRLIPGYEAPSILTYSASNRSASVRIPYGISKNSARFEFRFPDSSSNPYLAFGAILMAGIDGIKNKMDPGEAMDINLFKLTLDEIREKGIKQMPHTLRRSLEEMLADKQYLKEGQVFSEEFIQAYQSLKFHSEVFPWESKPHPFEFITTYSC.

Residues N22–K106 form the GS beta-grasp domain. Residues P114 to C481 form the GS catalytic domain. Residues E139, E141, E223, and E230 each coordinate Mg(2+). Residues N274–G275 and G275 contribute to the L-glutamate site. A Mg(2+)-binding site is contributed by H279. Residues H281–S283 and S283 contribute to the ATP site. Residues R331, E337, and R349 each contribute to the L-glutamate site. Positions 349 and 354 each coordinate ATP. E367 is a Mg(2+) binding site. R369 lines the L-glutamate pocket.

This sequence belongs to the glutamine synthetase family. As to quaternary structure, oligomer of 12 subunits arranged in the form of two hexameric ring. Requires Mg(2+) as cofactor.

It localises to the cytoplasm. It carries out the reaction L-glutamate + NH4(+) + ATP = L-glutamine + ADP + phosphate + H(+). The activity of this enzyme could be controlled by adenylation under conditions of abundant glutamine. Functionally, catalyzes the ATP-dependent biosynthesis of glutamine from glutamate and ammonia. The polypeptide is Glutamine synthetase (Helicobacter pylori (strain J99 / ATCC 700824) (Campylobacter pylori J99)).